The chain runs to 548 residues: T-complex protein 1 subunit alpha (548 aa).

The protein belongs to the TCP-1 chaperonin family. As to quaternary structure, heterooligomeric complex of about 850 to 900 kDa that forms two stacked rings, 12 to 16 nm in diameter.

The protein resides in the cytoplasm. Molecular chaperone; assists the folding of proteins upon ATP hydrolysis. Known to play a role, in vitro, in the folding of actin and tubulin. The sequence is that of T-complex protein 1 subunit alpha (tcp1) from Dictyostelium discoideum (Social amoeba).